A 320-amino-acid polypeptide reads, in one-letter code: Cytochrome c biogenesis protein CcsA (320 aa).

7 helical membrane passes run 14-34 (VLLLGLAAFALLLTALPWCFW), 68-88 (GHFPISNLYESLCFLAWACTL), 101-121 (LVAASATPMGLGCIAFASFAL), 146-166 (VIMVSYAALLVGSLLSVAVLM), 226-246 (TITVGFLLLTVGIISGAVWAN), 260-277 (TWALICWLVYAAYLHTRL), and 289-309 (VASLGLVVIVVCYIGVNLLGI).

It belongs to the CcmF/CycK/Ccl1/NrfE/CcsA family. In terms of assembly, may interact with ccs1.

It localises to the cellular thylakoid membrane. In terms of biological role, required during biogenesis of c-type cytochromes (cytochrome c6 and cytochrome f) at the step of heme attachment. The protein is Cytochrome c biogenesis protein CcsA of Synechococcus sp. (strain WH7803).